Reading from the N-terminus, the 160-residue chain is GPI-anchored protein LLG3 (160 aa).

The signal sequence occupies residues 1–23 (MKITHHCLVSLLSILLLSGFAFS). A glycan (N-linked (GlcNAc...) asparagine) is linked at N56. The GPI-anchor amidated serine moiety is linked to residue S137. The propeptide at 138 to 160 (HASIPLVSTHVLLITVSILFHLF) is removed in mature form.

In terms of tissue distribution, expressed in pollen, pollen tubes, sporophytic pistil tissues, in the early stages of female gametophyte development, and in unfertilized, mature ovules.

The protein localises to the cell membrane. This is GPI-anchored protein LLG3 from Arabidopsis thaliana (Mouse-ear cress).